A 189-amino-acid polypeptide reads, in one-letter code: Large ribosomal subunit protein eL18 (189 aa).

Belongs to the eukaryotic ribosomal protein eL18 family.

Its subcellular location is the cytoplasm. In Anopheles gambiae (African malaria mosquito), this protein is Large ribosomal subunit protein eL18 (RpL18).